Consider the following 372-residue polypeptide: Alpha-parvin (372 aa).

Residues 1 to 11 (MATSPQKSPSV) are compositionally biased toward low complexity. A disordered region spans residues 1–45 (MATSPQKSPSVPKSPTPKSPPSRKKDDSFLGKLGGTLARRKKAKE). N-acetylalanine is present on alanine 2. A phosphoserine mark is found at serine 8, serine 14, and serine 19. The interval 21 to 25 (PSRKK) is interaction with ARHGAP31. A phosphoserine mark is found at serine 28 and serine 62. Calponin-homology (CH) domains lie at 95 to 202 (QELM…QYFR) and 262 to 369 (NVVK…TKYR). Residues 223-372 (GILQSRQIQE…NLFTKYRNVE (150 aa)) are required for interaction with TESK1 and ILK.

This sequence belongs to the parvin family. Component of the heterotrimeric IPP (ILK-PINCH-PARVIN) complex composed of ILK, LIMS1/PINCH and PARVA; the complex binds to F-actin via the C-terminal tail of LIMS1 and the N-terminal region of PARVA, promoting F-actin filament bundling. Formation of the IPP complex is dependent on protein kinase C and precedes integrin-mediated cell adhesion and spreading. Interacts with TGFB1I1. Interacts with ARHGAP31. Interacts with the actin cytoskeleton. Interacts (via C-terminus) with TESK1 (via C-terminus); the interaction inhibits TESK1 kinase activity. Interacts with PXN/PAXILLIN (via LD motif 4). Widely expressed, with highest levels in heart, skeletal muscle, kidney and liver.

Its subcellular location is the cell junction. The protein localises to the focal adhesion. It is found in the cell membrane. The protein resides in the cytoplasm. It localises to the cytoskeleton. Its subcellular location is the myofibril. The protein localises to the sarcomere. It is found in the z line. Plays a role in sarcomere organization and in smooth muscle cell contraction. Required for normal development of the embryonic cardiovascular system, and for normal septation of the heart outflow tract. Plays a role in sprouting angiogenesis and is required for normal adhesion of vascular smooth muscle cells to endothelial cells during blood vessel development. Plays a role in the reorganization of the actin cytoskeleton, formation of lamellipodia and ciliogenesis. Plays a role in the establishment of cell polarity, cell adhesion, cell spreading, and directed cell migration. Within the IPP (ILK-PINCH-PARVIN) complex, binds to F-actin, promoting F-actin bundling, a process required to generate force for actin cytoskeleton reorganization and subsequent dynamic cell adhesion events such as cell spreading and migration. In Homo sapiens (Human), this protein is Alpha-parvin (PARVA).